A 187-amino-acid chain; its full sequence is Ribosome maturation factor RimM (187 aa).

Residues 95-178 (DEDEFFYADL…GLVEDKDESL (84 aa)) enclose the PRC barrel domain.

Belongs to the RimM family. Binds ribosomal protein uS19.

It is found in the cytoplasm. An accessory protein needed during the final step in the assembly of 30S ribosomal subunit, possibly for assembly of the head region. Essential for efficient processing of 16S rRNA. May be needed both before and after RbfA during the maturation of 16S rRNA. It has affinity for free ribosomal 30S subunits but not for 70S ribosomes. The chain is Ribosome maturation factor RimM from Sinorhizobium fredii (strain NBRC 101917 / NGR234).